A 92-amino-acid chain; its full sequence is UPF0223 protein SSA_0938 (92 aa).

Belongs to the UPF0223 family.

The chain is UPF0223 protein SSA_0938 from Streptococcus sanguinis (strain SK36).